Reading from the N-terminus, the 495-residue chain is Glutamate--tRNA ligase 1 (495 aa).

The short motif at 10 to 20 (PSPTGALHMGG) is the 'HIGH' region element. Positions 251–255 (KLSKR) match the 'KMSKS' region motif. Lysine 254 is a binding site for ATP.

This sequence belongs to the class-I aminoacyl-tRNA synthetase family. Glutamate--tRNA ligase type 1 subfamily. In terms of assembly, monomer.

The protein localises to the cytoplasm. The catalysed reaction is tRNA(Glu) + L-glutamate + ATP = L-glutamyl-tRNA(Glu) + AMP + diphosphate. In terms of biological role, catalyzes the attachment of glutamate to tRNA(Glu) in a two-step reaction: glutamate is first activated by ATP to form Glu-AMP and then transferred to the acceptor end of tRNA(Glu). This chain is Glutamate--tRNA ligase 1, found in Syntrophomonas wolfei subsp. wolfei (strain DSM 2245B / Goettingen).